A 786-amino-acid chain; its full sequence is Signal transducer and activator of transcription 5B (786 aa).

The residue at position 90 (Tyr-90) is a Phosphotyrosine. Ser-128 is modified (phosphoserine). The SH2 domain occupies 589 to 686 (WNDGAILGFV…EVYSKYYTPV (98 aa)). 2 positions are modified to phosphotyrosine: Tyr-682 and Tyr-699.

Belongs to the transcription factor STAT family. As to quaternary structure, upon activation, forms a homodimer or a heterodimer with a related family member. Binds NR3C1. Interacts with NCOA1. Interacts with NMI. Interacts with SOCS7. Interacts (via SH2 domain) with INSR. Interacts with CPEB3; this inhibits STAT5B-mediated transcriptional activation. In terms of processing, tyrosine phosphorylated in response to signaling via activated KIT, resulting in translocation to the nucleus. Tyrosine phosphorylated in response to signaling via activated FLT3; wild-type FLT3 results in much weaker phosphorylation than constitutively activated mutant FLT3. Alternatively, can be phosphorylated by JAK2. Phosphorylation at Tyr-699 by PTK6 or HCK leads to an increase of its transcriptional activity.

It localises to the cytoplasm. It is found in the nucleus. Carries out a dual function: signal transduction and activation of transcription. Mediates cellular responses to the cytokine KITLG/SCF and other growth factors. Binds to the GAS element and activates PRL-induced transcription. Positively regulates hematopoietic/erythroid differentiation. The sequence is that of Signal transducer and activator of transcription 5B (Stat5b) from Rattus norvegicus (Rat).